Here is a 295-residue protein sequence, read N- to C-terminus: Bifunctional protein FolD (295 aa).

Residues 172–174 (GRS), Ser-197, and Ile-238 contribute to the NADP(+) site.

The protein belongs to the tetrahydrofolate dehydrogenase/cyclohydrolase family. As to quaternary structure, homodimer.

The enzyme catalyses (6R)-5,10-methylene-5,6,7,8-tetrahydrofolate + NADP(+) = (6R)-5,10-methenyltetrahydrofolate + NADPH. The catalysed reaction is (6R)-5,10-methenyltetrahydrofolate + H2O = (6R)-10-formyltetrahydrofolate + H(+). It participates in one-carbon metabolism; tetrahydrofolate interconversion. Its function is as follows. Catalyzes the oxidation of 5,10-methylenetetrahydrofolate to 5,10-methenyltetrahydrofolate and then the hydrolysis of 5,10-methenyltetrahydrofolate to 10-formyltetrahydrofolate. This is Bifunctional protein FolD from Rickettsia akari (strain Hartford).